We begin with the raw amino-acid sequence, 688 residues long: Telomere length regulation protein TEL2 (688 aa).

2 positions are modified to phosphoserine: Ser-417 and Ser-419.

The protein belongs to the TEL2 family. Component of the TTT complex composed of TEL2, TTI1 and TTI2. Interacts with TTI1 and TTI2.

The protein localises to the nucleus. It localises to the chromosome. The protein resides in the telomere. Its function is as follows. Part of the TTT complex that is required to stabilize protein levels of the phosphatidylinositol 3-kinase-related protein kinase (PIKK) family proteins. Required for telomere length regulation and telomere position effect. Regulates telomere length and participates in gene silencing at subtelomeric regions. Binds to telomeric DNA repeats. The chain is Telomere length regulation protein TEL2 (TEL2) from Saccharomyces cerevisiae (strain ATCC 204508 / S288c) (Baker's yeast).